Reading from the N-terminus, the 802-residue chain is DSC E3 ubiquitin ligase complex subunit A (802 aa).

Positions 1–22 (MDNRGSFFFLLIVFYLLLSSQS) are cleaved as a signal peptide. Over 23 to 381 (RPPLLDQDRE…TGPKIEEYDK (359 aa)) the chain is Lumenal. N48, N71, N115, N126, N148, and N166 each carry an N-linked (GlcNAc...) asparagine glycan. The helical transmembrane segment at 382 to 402 (YSARLVFIICGVFAAQITLLL) threads the bilayer. Topologically, residues 403–429 (RQIKEASTPSTRSRISFYTIALMAFGD) are cytoplasmic. Residues 430–450 (AFVLIFILLELYPAVSFLVMA) traverse the membrane as a helical segment. Over 451 to 453 (TAA) the chain is Lumenal. A helical transmembrane segment spans residues 454 to 474 (FLTFLSVSYIGMKFMMEIWAV). Over 475–550 (QAPERREQER…QETRNDVGAM (76 aa)) the chain is Cytoplasmic. Residues 478–541 (ERREQERRSN…TNRGTTSAAQ (64 aa)) form a disordered region. Polar residues predominate over residues 532–541 (TNRGTTSAAQ). The helical transmembrane segment at 551–571 (YARFYFVLFVMLIISIWSFLW) threads the bilayer. The Lumenal portion of the chain corresponds to 572 to 574 (PNR). Residues 575-595 (LGALYARALAFVYLSFWTPQI) traverse the membrane as a helical segment. At 596–608 (GRNIIRNCRKALR) the chain is on the cytoplasmic side. A helical membrane pass occupies residues 609-629 (WDFVIGQSILRLFPFVYFLTV). Residues 630–642 (RGNVLFIHPDTTT) lie on the Lumenal side of the membrane. A helical membrane pass occupies residues 643–663 (AFALAGWVWIQVWVLASQDIL). Topologically, residues 664–802 (GPRFFVPRGW…PICRESIPPV (139 aa)) are cytoplasmic. An RING-type; atypical zinc finger spans residues 732-796 (CAICMQEIEV…RLRLQCPICR (65 aa)).

In terms of assembly, component of the DSC E3 ubiquitin ligase complex composed of dscA, dscB, dscC and dscD.

It localises to the endoplasmic reticulum membrane. The enzyme catalyses S-ubiquitinyl-[E2 ubiquitin-conjugating enzyme]-L-cysteine + [acceptor protein]-L-lysine = [E2 ubiquitin-conjugating enzyme]-L-cysteine + N(6)-ubiquitinyl-[acceptor protein]-L-lysine.. It functions in the pathway protein modification; protein ubiquitination. Catalytic component of the DSC E3 ubiquitin ligase complex which is required for the srbA transcriptional activator proteolytic cleavage to release the soluble transcription factor from the membrane in low oxygen or sterol conditions. Required for growth during hypoxia and triazole drug susceptibility, as well as for virulence in a murine model of invasive pulmonary aspergillosis (IPA). The protein is DSC E3 ubiquitin ligase complex subunit A of Aspergillus fumigatus (strain CBS 144.89 / FGSC A1163 / CEA10) (Neosartorya fumigata).